A 512-amino-acid chain; its full sequence is Glycerol-3-phosphate dehydrogenase (512 aa).

16 to 44 lines the FAD pocket; that stretch reads DVAVVGGGINGVGIAADAAGRGLSVFLCE.

The protein belongs to the FAD-dependent glycerol-3-phosphate dehydrogenase family. It depends on FAD as a cofactor.

Its subcellular location is the cytoplasm. It carries out the reaction a quinone + sn-glycerol 3-phosphate = dihydroxyacetone phosphate + a quinol. This is Glycerol-3-phosphate dehydrogenase (glpD) from Pseudomonas aeruginosa (strain ATCC 15692 / DSM 22644 / CIP 104116 / JCM 14847 / LMG 12228 / 1C / PRS 101 / PAO1).